We begin with the raw amino-acid sequence, 529 residues long: UDP-glycosyltransferase (529 aa).

N-linked (GlcNAc...) asparagine glycans are attached at residues Asn70 and Asn420. The helical transmembrane segment at 504 to 524 (LDLYLVYIALFAVPVGAVRWI) threads the bilayer.

The protein belongs to the glycosyltransferase 28 family.

It localises to the membrane. The catalysed reaction is stromemycin aglycone + UDP-alpha-D-glucose = stromemycin + UDP + H(+). Its pathway is mycotoxin biosynthesis. In terms of biological role, UDP-glycosyltransferase; part of the gene cluster that mediates the biosynthesis of stromemycin, a depside C-glucoside with two unsaturated C9 side chains belonging to aromatic polyketide glycosides. Acts as the tailoring enzyme responsible for 3-C-glucosylation of bininalkenylresorcylic acid to yield stromemycin. The polypeptide is UDP-glycosyltransferase (Talaromyces amestolkiae).